The primary structure comprises 289 residues: Ribosomal RNA small subunit methyltransferase I (289 aa).

Belongs to the methyltransferase superfamily. RsmI family.

It localises to the cytoplasm. The catalysed reaction is cytidine(1402) in 16S rRNA + S-adenosyl-L-methionine = 2'-O-methylcytidine(1402) in 16S rRNA + S-adenosyl-L-homocysteine + H(+). Its function is as follows. Catalyzes the 2'-O-methylation of the ribose of cytidine 1402 (C1402) in 16S rRNA. The chain is Ribosomal RNA small subunit methyltransferase I from Halalkalibacterium halodurans (strain ATCC BAA-125 / DSM 18197 / FERM 7344 / JCM 9153 / C-125) (Bacillus halodurans).